The sequence spans 479 residues: Serine palmitoyltransferase 1 (479 aa).

At 1–16 the chain is on the lumenal side; sequence MFLFDIYNNILYYTKE. The helical transmembrane segment at 17–37 threads the bilayer; it reads FIVTSTSPNLFIHGLMAVFII. Residues 38–479 lie on the Cytoplasmic side of the membrane; that stretch reads YLLTKRPFKP…KCTSFVLESN (442 aa).

This sequence belongs to the class-II pyridoxal-phosphate-dependent aminotransferase family. As to quaternary structure, forms a heterodimer with sptB. Pyridoxal 5'-phosphate is required as a cofactor.

The protein resides in the endoplasmic reticulum membrane. It catalyses the reaction L-serine + hexadecanoyl-CoA + H(+) = 3-oxosphinganine + CO2 + CoA. It participates in lipid metabolism; sphingolipid metabolism. Component of serine palmitoyltransferase (SPT), which catalyzes the committed step in the synthesis of sphingolipids, the condensation of serine with palmitoyl CoA to form the long chain base 3-ketosphinganine. In Dictyostelium discoideum (Social amoeba), this protein is Serine palmitoyltransferase 1 (sptA).